We begin with the raw amino-acid sequence, 343 residues long: F17g-G fimbrial adhesin (343 aa).

An N-terminal signal peptide occupies residues 1-22 (MTNFYKVCLAVFILVCCNISHA). Positions 23–199 (AVSFIGSTEN…LNPFTLNDTV (177 aa)) are receptor-binding lectin domain. A carbohydrate contacts are provided by residues 65-66 (AN), 110-111 (DT), and 138-141 (STQG). A disulfide bridge connects residues cysteine 75 and cysteine 132. A fimbrillin-binding domain region spans residues 200–343 (TSCRLLTPSA…GISTFTFSYQ (144 aa)). Residues 287–307 (LKFGPDSPVKGNENQWQLSTG) form a disordered region. Polar residues predominate over residues 298–307 (NENQWQLSTG).

It belongs to the fimbrial protein family.

It localises to the fimbrium. Essential fimbrial adhesion factor that mediates binding to N-acetylglucosamine-containing receptors in the host intestinal microvilli, leading to colonization of the intestinal tissue, and diarrhea or septicemia. Also confers adhesiveness to laminin and basement membranes. May be involved in the initiation of polymerization of fimbrillin monomers during fimbrial filament biogenesis. The polypeptide is F17g-G fimbrial adhesin (f17gG) (Escherichia coli).